The chain runs to 286 residues: 4-hydroxybenzoate octaprenyltransferase (286 aa).

Helical transmembrane passes span 22-42, 45-65, 98-118, 143-163, 213-233, 238-255, and 266-286; these read IGTLLLLWPTLWALYLAEKAM, LSVLAIFIFGVFLMRSAGCVI, LFIVLVFCSFLLVLCLNLYTI, FFLGAAFGWSIPMAYGATIEA, IIALLQIITLIFLFSVGYLSQ, YFIVLAIAGLFFVYQCRL, and NAFLNNNYFGLTVFIAVLFGI.

The protein belongs to the UbiA prenyltransferase family. Mg(2+) serves as cofactor.

The protein resides in the cell inner membrane. It catalyses the reaction all-trans-octaprenyl diphosphate + 4-hydroxybenzoate = 4-hydroxy-3-(all-trans-octaprenyl)benzoate + diphosphate. It participates in cofactor biosynthesis; ubiquinone biosynthesis. Catalyzes the prenylation of para-hydroxybenzoate (PHB) with an all-trans polyprenyl group. Mediates the second step in the final reaction sequence of ubiquinone-8 (UQ-8) biosynthesis, which is the condensation of the polyisoprenoid side chain with PHB, generating the first membrane-bound Q intermediate 3-octaprenyl-4-hydroxybenzoate. This is 4-hydroxybenzoate octaprenyltransferase from Histophilus somni (strain 2336) (Haemophilus somnus).